Here is a 334-residue protein sequence, read N- to C-terminus: Thioredoxin reductase aclT (334 aa).

Residues 16-19 (GGPA), 38-43 (NASIDR), I93, A122, D294, and 302-303 (TL) each bind FAD.

The protein belongs to the class-II pyridine nucleotide-disulfide oxidoreductase family. Homodimer. FAD is required as a cofactor.

Its pathway is mycotoxin biosynthesis. Thioredoxin reductase; part of the gene cluster that mediates the biosynthesis of aspirochlorine (or antibiotic A30641), an unusual halogenated spiro compound with distinctive antifungal properties due to selective inhibition of protein biosynthesis, and which is also active against bacteria, viruses, and murine tumor cells. The non-ribosomal peptide synthetase (NRPS) aclP is responsible the formation of the diketopiperazine (DKP) core from the condensation of 2 phenylalanine residues. One Phe residue is tailored into chlorotyrosine by hydroxylation and chlorination, whereas the second Phe undergoes an unprecedented C-C bond cleavage to be converted into glycine. After formation of the DKP, sulfur is incorporated into the DKP by conjugation with glutathione by aclG, followed by its stepwise degradation to the thiol by aclI, aclJ and aclK, and the dithiol oxidation by aclT. In addition, oxygenases (aclB, aclC, aclL and aclO) and O-methyltransferases (aclM and aclU) act as tailoring enzymes to produce the intermediate dechloroaspirochlorine. Ultimately, chlorination of dechloroaspirochlorine by the halogenase aclH is the last step in the aspirochlorine pathway. The protein is Thioredoxin reductase aclT of Aspergillus oryzae (strain ATCC 42149 / RIB 40) (Yellow koji mold).